A 109-amino-acid chain; its full sequence is ATPase inhibitor, mitochondrial (109 aa).

The transit peptide at 1–22 (MAGSSSLLRAGIRNVLLMQMRR) directs the protein to the mitochondrion. The segment at 27-56 (LGELGKGAGKGGGGGGSVREAGGAFGKRQA) is N-terminal inhibitory region. Positions 27-109 (LGELGKGAGK…KSKIKKLNDD (83 aa)) are disordered. Gly residues predominate over residues 30–43 (LGKGAGKGGGGGGS). Basic and acidic residues-rich tracts occupy residues 55 to 69 (QAAEEERYFRQKEQE) and 77 to 98 (HHEEEIRHHKGEIERLQKEIER). Residues 71–109 (IASLRKHHEEEIRHHKGEIERLQKEIERHKSKIKKLNDD) are a coiled coil. The tract at residues 78 to 109 (HEEEIRHHKGEIERLQKEIERHKSKIKKLNDD) is antiparallel alpha-helical coiled coil region. Residues 99–109 (HKSKIKKLNDD) show a composition bias toward basic residues.

The protein belongs to the ATPase inhibitor family. In terms of assembly, homodimer; represents the active form and is present at a pH value below 6.5. Homotetramer; represents the inactive form and is present at a pH value above 7.0.

The protein localises to the mitochondrion. Endogenous F(1)F(o)-ATPase inhibitor limiting ATP depletion when the mitochondrial membrane potential falls below a threshold and the F(1)F(o)-ATP synthase starts hydrolyzing ATP to pump protons out of the mitochondrial matrix. Required to avoid the consumption of cellular ATP when the F(1)F(o)-ATP synthase enzyme acts as an ATP hydrolase. Indirectly acts as a regulator of heme synthesis in erythroid tissues: regulates heme synthesis by modulating the mitochondrial pH and redox potential, allowing fech to efficiently catalyze the incorporation of iron into protoporphyrin IX to produce heme. In Xenopus tropicalis (Western clawed frog), this protein is ATPase inhibitor, mitochondrial.